The sequence spans 174 residues: Inactive protein RESTRICTED TEV MOVEMENT 1 (174 aa).

One can recognise a Jacalin-type lectin domain in the interval 1–152 (MKIGPVGKHD…LQYIGVYLRP (152 aa)).

This sequence belongs to the jacalin lectin family. In terms of assembly, self-interacts. Interacts with RTM3.

It localises to the cytoplasm. Unable to mediate restriction of long-distance movement of the pathogenic tobacco etch virus (TEV) without causing a hypersensitive response or inducing systemic acquired resistance. This is Inactive protein RESTRICTED TEV MOVEMENT 1 (RTM1) from Arabidopsis thaliana (Mouse-ear cress).